The primary structure comprises 288 residues: Sulfur carrier protein FdhD (288 aa).

Positions 1 to 23 (MMRCMQSPEVHPAAAGDAEPPTH) are disordered. The active-site Cysteine persulfide intermediate is cysteine 127.

Belongs to the FdhD family.

The protein localises to the cytoplasm. Functionally, required for formate dehydrogenase (FDH) activity. Acts as a sulfur carrier protein that transfers sulfur from IscS to the molybdenum cofactor prior to its insertion into FDH. In Cupriavidus necator (strain ATCC 17699 / DSM 428 / KCTC 22496 / NCIMB 10442 / H16 / Stanier 337) (Ralstonia eutropha), this protein is Sulfur carrier protein FdhD.